Here is a 224-residue protein sequence, read N- to C-terminus: MLTSQSKLQPREQVALYGAASLSDEQLATVILRSGTQHLPVEVVAQRLLQRYPDFQDLEQADLVQLRQIEGIGPVKAIELQAICELSRRIQNQRTLRFGVVASSQMVGQRMIESLAGETQEQLLAVYLDVKNQIIQIKQLYLGTLNSSVAHPREVFKWAVQYSAAKFILVHNHPSGQLAPSTQDINFTKRIVNCGQLMGITCLDHLIIGSSQYLSLREEGYLVD.

The MPN domain maps to 100–222 (VVASSQMVGQ…YLSLREEGYL (123 aa)). Zn(2+)-binding residues include histidine 171, histidine 173, and aspartate 184. Positions 171 to 184 (HNHPSGQLAPSTQD) match the JAMM motif motif.

It belongs to the UPF0758 family.

In Latilactobacillus sakei subsp. sakei (strain 23K) (Lactobacillus sakei subsp. sakei), this protein is UPF0758 protein LCA_0852.